Consider the following 88-residue polypeptide: MGIARILSAVLFLSVLFVVTFPTLLSADHHDGRIDTCRLPSDRGRCKASFERWYFNGTTCTKFVYGGYGGNDNRFPTEKARMKRCAKA.

The first 27 residues, 1-27 (MGIARILSAVLFLSVLFVVTFPTLLSA), serve as a signal peptide directing secretion. A propeptide spanning residues 28–33 (DHHDGR) is cleaved from the precursor. Residues 37–85 (CRLPSDRGRCKASFERWYFNGTTCTKFVYGGYGGNDNRFPTEKARMKRC) enclose the BPTI/Kunitz inhibitor domain. The cysteines at positions 37 and 85 are disulfide-linked.

The protein belongs to the venom Kunitz-type family. 01 (intermediate) subfamily. As to expression, expressed by the venom gland.

It is found in the secreted. Functionally, serine protease inhibitor that inhibits trypsin at a molar ratio of 1:1. In Cyriopagopus hainanus (Chinese bird spider), this protein is Kunitz-type U15-theraphotoxin-Hhn1o.